Here is a 121-residue protein sequence, read N- to C-terminus: Apoptin (121 aa).

Disordered regions lie at residues 1-28 and 57-121; these read MNAL…LETP and LRSA…CIRL. Positions 58-70 are enriched in polar residues; it reads RSATADNSESTGF. Residues 88–102 are compositionally biased toward basic and acidic residues; the sequence is RSCDPSEYRVSELKE.

Belongs to the gyrovirus apoptin family.

The protein localises to the host nucleus. In terms of biological role, may act as transcriptional regulator. Induces apoptosis in infected cells. Element of infectious replication cycle. The polypeptide is Apoptin (VP3) (Gallus gallus (Chicken)).